An 86-amino-acid polypeptide reads, in one-letter code: Large ribosomal subunit protein uL23 (86 aa).

It belongs to the universal ribosomal protein uL23 family. Part of the 50S ribosomal subunit. Contacts protein L29.

Binds to 23S rRNA. One of the proteins that surrounds the polypeptide exit tunnel on the outside of the ribosome. This chain is Large ribosomal subunit protein uL23, found in Pyrococcus horikoshii (strain ATCC 700860 / DSM 12428 / JCM 9974 / NBRC 100139 / OT-3).